We begin with the raw amino-acid sequence, 1026 residues long: Cadherin-like and PC-esterase domain-containing protein 1 (1026 aa).

A signal peptide spans 1-34 (MVCRPVFPCRRRFCPRPFLVGLVVAICLFYQTLT). N-linked (GlcNAc...) asparagine glycans are attached at residues Asn-251, Asn-404, Asn-413, Asn-737, Asn-791, and Asn-985.

It belongs to the PC-esterase family.

The polypeptide is Cadherin-like and PC-esterase domain-containing protein 1 (CPED1) (Homo sapiens (Human)).